A 562-amino-acid polypeptide reads, in one-letter code: Protein FAM83D-B (562 aa).

The tract at residues 424 to 472 (ITTQTTETSQCTTQTPAPTSSVARLSNSSNSSSSSFSSASTTSTGSNCS) is disordered. Low complexity predominate over residues 425–472 (TTQTTETSQCTTQTPAPTSSVARLSNSSNSSSSSFSSASTTSTGSNCS).

The protein belongs to the FAM83 family.

It localises to the cytoplasm. The protein localises to the cytoskeleton. It is found in the spindle. The protein resides in the spindle pole. In terms of biological role, may regulate cell proliferation, growth, migration and epithelial to mesenchymal transition. May also be important for proper chromosome congression and alignment during mitosis. In Xenopus laevis (African clawed frog), this protein is Protein FAM83D-B.